A 176-amino-acid polypeptide reads, in one-letter code: Epididymal-specific lipocalin-9 (176 aa).

A signal peptide spans 1–15 (MALLLLSLGLSLIAA). N-linked (GlcNAc...) asparagine glycans are attached at residues asparagine 68 and asparagine 129. Cysteine 83 and cysteine 161 form a disulfide bridge.

Belongs to the calycin superfamily. Lipocalin family.

The protein resides in the secreted. This is Epididymal-specific lipocalin-9 from Homo sapiens (Human).